Here is a 535-residue protein sequence, read N- to C-terminus: GMP synthase [glutamine-hydrolyzing] (535 aa).

Residues 4-210 (KILILDFGSQ…VHEICHCKPD (207 aa)) enclose the Glutamine amidotransferase type-1 domain. Cysteine 85 serves as the catalytic Nucleophile. Active-site residues include histidine 184 and glutamate 186. In terms of domain architecture, GMPS ATP-PPase spans 211-403 (WVMGDYIAEA…LGLPREMVYR (193 aa)). 238–244 (SGGVDSS) contributes to the ATP binding site.

In terms of assembly, homodimer.

It carries out the reaction XMP + L-glutamine + ATP + H2O = GMP + L-glutamate + AMP + diphosphate + 2 H(+). It participates in purine metabolism; GMP biosynthesis; GMP from XMP (L-Gln route): step 1/1. Catalyzes the synthesis of GMP from XMP. This chain is GMP synthase [glutamine-hydrolyzing], found in Polynucleobacter asymbioticus (strain DSM 18221 / CIP 109841 / QLW-P1DMWA-1) (Polynucleobacter necessarius subsp. asymbioticus).